The sequence spans 215 residues: Ribonuclease (215 aa).

A signal peptide spans 1 to 22; that stretch reads MKKIVVLLGMLLAPWFSSAVQA. Catalysis depends on residues histidine 62, glutamate 102, and histidine 106. Residues 144–166 are disordered; sequence KPLPAQGGSGQCQRLAGPGQHHG.

Belongs to the RNase T2 family.

It is found in the periplasm. It localises to the cytoplasm. Its function is as follows. One of the few RNases that cleave the phosphodiester bond between any two nucleotide. Shows a preference for adenylic acid. The sequence is that of Ribonuclease from Aeromonas hydrophila.